Consider the following 403-residue polypeptide: D-galactonate dehydratase family member Mmwyl1_0037 (403 aa).

Residues Asn-37 and His-122 each contribute to the substrate site. Tyr-159 functions as the Proton donor/acceptor in the catalytic mechanism. Residue Asp-211 participates in Mg(2+) binding. His-213 (proton donor/acceptor) is an active-site residue. The Mg(2+) site is built by Glu-237 and Glu-263. 5 residues coordinate substrate: Glu-263, Arg-284, His-313, Asp-317, and Glu-340.

It belongs to the mandelate racemase/muconate lactonizing enzyme family. GalD subfamily. The cofactor is Mg(2+).

The enzyme catalyses D-mannonate = 2-dehydro-3-deoxy-D-gluconate + H2O. Functionally, has low D-mannonate dehydratase activity (in vitro), suggesting that this is not a physiological substrate and that it has no significant role in D-mannonate degradation in vivo. Has no detectable activity with a panel of 70 other acid sugars (in vitro). The chain is D-galactonate dehydratase family member Mmwyl1_0037 from Marinomonas sp. (strain MWYL1).